The sequence spans 790 residues: Chorion peroxidase (790 aa).

The first 16 residues, 1 to 16, serve as a signal peptide directing secretion; the sequence is MAKKVLLLSLYSAVLS. The propeptide occupies 17–209; that stretch reads TWFGFGYVQC…ARIPRAIRKR (193 aa). Cys210 is subject to N-acetylcysteine; in Chorion peroxidase light chain. A disulfide bridge links Cys216 with Cys229. An N-linked (Man) tryptophan glycan is attached at Trp259. The active-site Proton acceptor is the His305. Residue Asn327 is glycosylated (N-linked (GlcNAc...) asparagine). Tyr353 is modified (3',4'-dihydroxyphenylalanine). Residues Cys433 and Cys440 are joined by a disulfide bond. A glycan (N-linked (Man) tryptophan) is linked at Trp479. A heme b-binding site is contributed by His551. N-linked (Man) tryptophan glycosylation is present at Trp680. Residues Cys746 and Cys774 are joined by a disulfide bond. Residue Trp785 is glycosylated (N-linked (Man) tryptophan).

It belongs to the peroxidase family. XPO subfamily. Heterodimer. Requires heme b as cofactor. Post-translationally, N-glycosylated on Trp by mannose and on Asn by N-acetylglucosamine. There is a hexose glycosylation of an unidentified residue between 654 and 708; Trp-680 is conserved in closely related species and is probably mannosylated.

Its subcellular location is the secreted. The enzyme catalyses 2 a phenolic donor + H2O2 = 2 a phenolic radical donor + 2 H2O. Its activity is regulated as follows. Extremely resistant to denaturating agents, such as SDS and organic solvents. In terms of biological role, involved in the formation of a rigid and insoluble egg chorion by catalyzing chorion protein cross-linking through dityrosine formation and phenol oxidase-catalyzed chorion melanization. The sequence is that of Chorion peroxidase (pxt) from Aedes aegypti (Yellowfever mosquito).